The following is a 162-amino-acid chain: Cyclic pyranopterin monophosphate synthase (162 aa).

Residues 75–77 and 113–114 contribute to the substrate site; these read LCH and ME. Asp128 is an active-site residue.

It belongs to the MoaC family. In terms of assembly, homohexamer; trimer of dimers.

The catalysed reaction is (8S)-3',8-cyclo-7,8-dihydroguanosine 5'-triphosphate = cyclic pyranopterin phosphate + diphosphate. It functions in the pathway cofactor biosynthesis; molybdopterin biosynthesis. Functionally, catalyzes the conversion of (8S)-3',8-cyclo-7,8-dihydroguanosine 5'-triphosphate to cyclic pyranopterin monophosphate (cPMP). In Burkholderia cenocepacia (strain ATCC BAA-245 / DSM 16553 / LMG 16656 / NCTC 13227 / J2315 / CF5610) (Burkholderia cepacia (strain J2315)), this protein is Cyclic pyranopterin monophosphate synthase.